The primary structure comprises 564 residues: Oxalyl-CoA decarboxylase (564 aa).

Residues I32 and Y118 each contribute to the substrate site. Residues R158 and K220 each coordinate ADP. A substrate-binding site is contributed by 261-265 (AAARS). R280, D302, and I322 together coordinate ADP. N355 is a binding site for substrate. Residues Y372 and 396 to 398 (ANT) each bind thiamine diphosphate. Position 403–404 (403–404 (RN)) interacts with substrate. 421 to 423 (GVM) is a binding site for thiamine diphosphate. D447 serves as a coordination point for Mg(2+). Residue 448–449 (SA) coordinates thiamine diphosphate. Mg(2+) contacts are provided by N474 and G476. Y478 is a binding site for thiamine diphosphate. Position 550-552 (550-552 (SGH)) interacts with substrate.

It belongs to the TPP enzyme family. In terms of assembly, homotetramer; dimer of dimers. Requires Mg(2+) as cofactor. Thiamine diphosphate serves as cofactor.

It carries out the reaction oxalyl-CoA + H(+) = formyl-CoA + CO2. Its pathway is metabolic intermediate degradation; oxalate degradation; CO(2) and formate from oxalate: step 2/2. Functionally, involved in the catabolism of oxalate and in the adapatation to low pH via the induction of the oxalate-dependent acid tolerance response (ATR). Catalyzes the decarboxylation of oxalyl-CoA to yield carbon dioxide and formyl-CoA. The polypeptide is Oxalyl-CoA decarboxylase (oxc) (Escherichia coli O157:H7).